The primary structure comprises 506 residues: MEKFQGYLEFDGARQQSFLYPLFFREYIYVLAYDHGLNRLNRNRSIFLENADADYDKKYSSLIVKRLILRMYEQNRLSIPTTDLHKNPFLGHTNPLYYQMISVLFAVIVEIPFSLRLGSSFEGKQLKKSYNLQSIHSIFPFLEDKFSHSNYVLDVLIPYPIHLEILVQTLRYRVKDASSLHFFRLCXYEYCNWKNFDIKKKLILNPRFFLFLYNSHVCEYESIFFFLRKRSSHLRSTAYEVLFERILFYAKIQHFLKVFVNNFPAILGLLKDPFLHYVRYHGKSILATKDTPLLMNKWKFYFVNLWQFYFSVWFQSQKIHINQLSKDNLEFLGYLSSLRLNPLVVRSQMLENSFLIDNIRIKLDNKIPISSIIGSLTKDKFCNLLGHPISKANWTESSDSDILNRFVRICRNISHYYSGSSKKKHLYRIKYILRLCCVKTLARKHKSTVRAFLKRLGSGLLEEFLTGEDQVLSLIFPRSYYASKRLYRVRVWYLDILYLNDLVNHD.

The protein belongs to the intron maturase 2 family. MatK subfamily.

The protein resides in the plastid. Its subcellular location is the chloroplast. Usually encoded in the trnK tRNA gene intron. Probably assists in splicing its own and other chloroplast group II introns. The chain is Maturase K from Arabis alpina (Alpine rock-cress).